The sequence spans 133 residues: QDARQIERMIEGRHGLMTLMAYELGKLGGMAKEETPYDAEVAGDAASNLSALASVLSPELFPKGSAVGEAEDSEALPAIWEKPDDFAQKISDMEEAAAKMQAAAGTDLASLQGAMRDLGAGCGSCHETYRQKD.

Glutamine 1 is subject to Pyrrolidone carboxylic acid. Heme c is bound by residues methionine 17, cysteine 122, cysteine 125, and histidine 126.

Binds 1 heme c group covalently per subunit.

Its subcellular location is the periplasm. Monoheme c-type cytochrome, that is particularly expressed when cells generate energy via aerobic respiration. This chain is Cytochrome c-554 (cycF), found in Cereibacter sphaeroides (Rhodobacter sphaeroides).